The primary structure comprises 414 residues: Probable 26S proteasome regulatory subunit 6B (414 aa).

Position 202–209 (202–209) interacts with ATP; that stretch reads GPPGCGKT.

Belongs to the AAA ATPase family.

The protein resides in the cytoplasm. Its subcellular location is the nucleus. In terms of biological role, the 26S proteasome is involved in the ATP-dependent degradation of ubiquitinated proteins. The regulatory (or ATPase) complex confers ATP dependency and substrate specificity to the 26S complex. This chain is Probable 26S proteasome regulatory subunit 6B (rpt-3), found in Caenorhabditis elegans.